The following is a 190-amino-acid chain: CASP-like protein 2U1 (190 aa).

The Cytoplasmic segment spans residues 1-16; it reads MAFTSLLGSDAERKVA. Residues 17–37 form a helical membrane-spanning segment; sequence VAEVALRAVLCGLGALAAALV. Over 38–59 the chain is Extracellular; that stretch reads ATDTQTRTFFSLQKKATYTDMK. The chain crosses the membrane as a helical span at residues 60-80; sequence AMVLLVAAAAAAAGYSLLQAA. Residues 81-100 are Cytoplasmic-facing; the sequence is RCCCCVALLRTSIRPRARLL. Residues 101–121 form a helical membrane-spanning segment; it reads LAWCVFACDQALAYALLAAVV. The Extracellular portion of the chain corresponds to 122–152; that stretch reads AALQASVVAKQGLPQLQWMAICALYGAFCRQ. The chain crosses the membrane as a helical span at residues 153 to 173; that stretch reads AGAGVACAVAAAVDAALLAFL. The Cytoplasmic segment spans residues 174–190; it reads SAFNLFRLYGAKATTTT.

Belongs to the Casparian strip membrane proteins (CASP) family. As to quaternary structure, homodimer and heterodimers.

The protein resides in the cell membrane. In Zea mays (Maize), this protein is CASP-like protein 2U1.